An 81-amino-acid chain; its full sequence is Cytochrome c oxidase subunit 7B2, mitochondrial (81 aa).

Residues 1 to 25 constitute a mitochondrion transit peptide; it reads MMFPLARNALSSLKIQSILQSMARH. The Mitochondrial matrix portion of the chain corresponds to 26 to 33; that stretch reads SHVKHSPD. The helical transmembrane segment at 34-60 threads the bilayer; sequence FHDKYGNAVLASGTAFCVATWVFTATQ. Residues 61 to 81 lie on the Mitochondrial intermembrane side of the membrane; it reads IGIEWNLSPVGRVTPKEWKHQ.

It belongs to the cytochrome c oxidase VIIb family. As to quaternary structure, component of the cytochrome c oxidase (complex IV, CIV), a multisubunit enzyme composed of 14 subunits. The complex is composed of a catalytic core of 3 subunits MT-CO1, MT-CO2 and MT-CO3, encoded in the mitochondrial DNA, and 11 supernumerary subunits COX4I, COX5A, COX5B, COX6A, COX6B, COX6C, COX7A, COX7B, COX7C, COX8 and NDUFA4, which are encoded in the nuclear genome. The complex exists as a monomer or a dimer and forms supercomplexes (SCs) in the inner mitochondrial membrane with NADH-ubiquinone oxidoreductase (complex I, CI) and ubiquinol-cytochrome c oxidoreductase (cytochrome b-c1 complex, complex III, CIII), resulting in different assemblies (supercomplex SCI(1)III(2)IV(1) and megacomplex MCI(2)III(2)IV(2)).

The protein resides in the mitochondrion inner membrane. The protein operates within energy metabolism; oxidative phosphorylation. Functionally, component of the cytochrome c oxidase, the last enzyme in the mitochondrial electron transport chain which drives oxidative phosphorylation. The respiratory chain contains 3 multisubunit complexes succinate dehydrogenase (complex II, CII), ubiquinol-cytochrome c oxidoreductase (cytochrome b-c1 complex, complex III, CIII) and cytochrome c oxidase (complex IV, CIV), that cooperate to transfer electrons derived from NADH and succinate to molecular oxygen, creating an electrochemical gradient over the inner membrane that drives transmembrane transport and the ATP synthase. Cytochrome c oxidase is the component of the respiratory chain that catalyzes the reduction of oxygen to water. Electrons originating from reduced cytochrome c in the intermembrane space (IMS) are transferred via the dinuclear copper A center (CU(A)) of subunit 2 and heme A of subunit 1 to the active site in subunit 1, a binuclear center (BNC) formed by heme A3 and copper B (CU(B)). The BNC reduces molecular oxygen to 2 water molecules using 4 electrons from cytochrome c in the IMS and 4 protons from the mitochondrial matrix. The sequence is that of Cytochrome c oxidase subunit 7B2, mitochondrial (COX7B2) from Homo sapiens (Human).